Consider the following 310-residue polypeptide: HMG box-containing protein C28F2.11 (310 aa).

The span at 69 to 95 (ESPSKKATSPKKATPAAVAPVEATSAV) shows a compositional bias: low complexity. The interval 69–310 (ESPSKKATSP…TTPPTAKVAN (242 aa)) is disordered. Ser70 bears the Phosphoserine mark. Thr105 is modified (phosphothreonine). Residues 117–187 (PKRPPSAYNL…AYEEEMAAYN (71 aa)) constitute a DNA-binding region (HMG box). Basic and acidic residues-rich tracts occupy residues 131-178 (QRSE…LREA) and 200-226 (VTAEETSTKPSEDLSSPTKKDLIDFSE). Ser161, Ser214, and Ser215 each carry phosphoserine. 2 positions are modified to phosphothreonine: Thr217 and Thr237. Residues 255–268 (STVPTSNVEPVSQP) show a composition bias toward polar residues. Phosphoserine is present on residues Ser271, Ser278, Ser294, Ser295, and Ser297. Phosphothreonine is present on residues Thr302 and Thr305.

The protein localises to the cytoplasm. This is HMG box-containing protein C28F2.11 from Schizosaccharomyces pombe (strain 972 / ATCC 24843) (Fission yeast).